Here is a 185-residue protein sequence, read N- to C-terminus: Ribosome-recycling factor (185 aa).

It belongs to the RRF family.

The protein resides in the cytoplasm. Functionally, responsible for the release of ribosomes from messenger RNA at the termination of protein biosynthesis. May increase the efficiency of translation by recycling ribosomes from one round of translation to another. The sequence is that of Ribosome-recycling factor from Syntrophus aciditrophicus (strain SB).